A 427-amino-acid chain; its full sequence is Serine--tRNA ligase (427 aa).

231-233 contributes to the L-serine binding site; it reads TAE. 262-264 is an ATP binding site; it reads RSE. An L-serine-binding site is contributed by Glu285. 349 to 352 provides a ligand contact to ATP; it reads EISS. Ser385 provides a ligand contact to L-serine.

Belongs to the class-II aminoacyl-tRNA synthetase family. Type-1 seryl-tRNA synthetase subfamily. As to quaternary structure, homodimer. The tRNA molecule binds across the dimer.

The protein resides in the cytoplasm. It catalyses the reaction tRNA(Ser) + L-serine + ATP = L-seryl-tRNA(Ser) + AMP + diphosphate + H(+). It carries out the reaction tRNA(Sec) + L-serine + ATP = L-seryl-tRNA(Sec) + AMP + diphosphate + H(+). It functions in the pathway aminoacyl-tRNA biosynthesis; selenocysteinyl-tRNA(Sec) biosynthesis; L-seryl-tRNA(Sec) from L-serine and tRNA(Sec): step 1/1. Its function is as follows. Catalyzes the attachment of serine to tRNA(Ser). Is also able to aminoacylate tRNA(Sec) with serine, to form the misacylated tRNA L-seryl-tRNA(Sec), which will be further converted into selenocysteinyl-tRNA(Sec). The sequence is that of Serine--tRNA ligase from Staphylococcus saprophyticus subsp. saprophyticus (strain ATCC 15305 / DSM 20229 / NCIMB 8711 / NCTC 7292 / S-41).